Consider the following 217-residue polypeptide: Lectin ADEL (217 aa).

5 disulfides stabilise this stretch: Cys5/Cys187, Cys42/Cys68, Cys61/Cys77, Cys114/Cys135, and Cys142/Cys206. A glycan (N-linked (GlcNAc...) asparagine) is linked at Asn30. 2 N-linked (GlcNAc...) asparagine glycosylation sites follow: Asn102 and Asn126.

As to quaternary structure, homodimer; disulfide-linked. Post-translationally, contains disulfide bonds.

Its function is as follows. Binds in decreasing order of affinity: galacturonic acid, D-galactosamine, methyl-alpha-D-galactopyranoside and further galactose-containing carbohydrates. Has hemagglutinating activity against human and rabbit erythrocytes. The protein is Lectin ADEL of Aplysia dactylomela (Spotted sea hare).